The chain runs to 480 residues: Aspartyl/glutamyl-tRNA(Asn/Gln) amidotransferase subunit B (480 aa).

The protein belongs to the GatB/GatE family. GatB subfamily. Heterotrimer of A, B and C subunits.

The catalysed reaction is L-glutamyl-tRNA(Gln) + L-glutamine + ATP + H2O = L-glutaminyl-tRNA(Gln) + L-glutamate + ADP + phosphate + H(+). It carries out the reaction L-aspartyl-tRNA(Asn) + L-glutamine + ATP + H2O = L-asparaginyl-tRNA(Asn) + L-glutamate + ADP + phosphate + 2 H(+). In terms of biological role, allows the formation of correctly charged Asn-tRNA(Asn) or Gln-tRNA(Gln) through the transamidation of misacylated Asp-tRNA(Asn) or Glu-tRNA(Gln) in organisms which lack either or both of asparaginyl-tRNA or glutaminyl-tRNA synthetases. The reaction takes place in the presence of glutamine and ATP through an activated phospho-Asp-tRNA(Asn) or phospho-Glu-tRNA(Gln). This Streptococcus pneumoniae serotype 2 (strain D39 / NCTC 7466) protein is Aspartyl/glutamyl-tRNA(Asn/Gln) amidotransferase subunit B.